Consider the following 397-residue polypeptide: Phosphoglycerate kinase (397 aa).

Residues Asp-21–Asn-23, Arg-37, His-60–Arg-63, Arg-119, and Arg-152 contribute to the substrate site. ATP contacts are provided by residues Lys-203, Gly-294, Glu-325, and Gly-354–Ser-357.

This sequence belongs to the phosphoglycerate kinase family. As to quaternary structure, monomer.

Its subcellular location is the cytoplasm. It catalyses the reaction (2R)-3-phosphoglycerate + ATP = (2R)-3-phospho-glyceroyl phosphate + ADP. It functions in the pathway carbohydrate degradation; glycolysis; pyruvate from D-glyceraldehyde 3-phosphate: step 2/5. The protein is Phosphoglycerate kinase of Chlorobium limicola (strain DSM 245 / NBRC 103803 / 6330).